Here is a 241-residue protein sequence, read N- to C-terminus: Endodeoxyribonuclease NucC (241 aa).

Residues Asp73, Glu104, and Lys106 contribute to the active site. The Mg(2+) site is built by Asp73 and Glu104.

The protein belongs to the NucC endonuclease family. In terms of assembly, self-oligomerizes. Forms homotrimers; in the presence of cAAA the trimers associate face-to-face to form homohexamers. The 2 cAAA-binding sites are on the exterior of the hexamer at the three-way junction, there are maximally 2 cyclic nucleotides per hexamer. Mg(2+) serves as cofactor.

With respect to regulation, activated by cAAA and to a lesser extent cAA and cAAG; cAAA and cAA are products of its cognate CD-NTase. Cyclic nucleotide binding causes hexamerization. Cyclic nucleotide binding causes a series of shifts that enclose the cAAA molecule, enable hexamer formation and juxtapose pairs of active sites to allow dsDNA cleavage. Effector DNase of a CBASS antivirus system. CBASS (cyclic oligonucleotide-based antiphage signaling system) provides immunity against bacteriophage. The CD-NTase protein synthesizes cyclic nucleotides in response to infection; these serve as specific second messenger signals. The signals activate a diverse range of effectors, leading to bacterial cell death and thus abortive phage infection. A type III-C(AAA) CBASS system. Its function is as follows. A cyclic nucleotide-activated dsDNase. In the presence of 3',3',3'-cyclic AMP-AMP-AMP (cAAA), and to a lesser extent 3',3',3'-cyclic AMP-AMP-GMP (cAAG) and cyclic-di-AMP (c-di-AMP), endonucleolytically degrades dsDNA. Binds one cAAA in a pocket on one surface of the trimer; cAAA binding promotes hexamerization, which is necessary for nuclease activation. Also binds c-diAMP or linear di-AMP with lower affinity. The nuclease digests dsDNA to about 50 bp lengths with a 2-base 3' overhang and a consensus recognition site of 5'-Axx|T-3'. DNA has been modeled to contact a pair of juxtaposed active sites (one from each layer of the hexamer), accounting for cleavage on both strands and the 2-base overhang. Functionally, protects E.coli strain JP313 against bacteriophage lambda cI- infection. When the cdnC-cap7-cap6-nucC operon is transformed into a susceptible strain it confers bacteriophage immunity. Mutations in the sensor (Cap7 also called HORMA) or effector proteins (CdnC, NucC) but not the disassembly protein (Cap6 also called Trip13) no longer confer immunity. The presence of the intact operon leads to culture collapse and cell death which occurs before the phage has finished its replication cycle, thus protecting non-infected bacteria by aborting the phage infection and preventing its propagation. The sequence is that of Endodeoxyribonuclease NucC from Escherichia coli (strain MS 115-1).